Consider the following 923-residue polypeptide: Inorganic phosphate transporter PHO87 (923 aa).

Residues 1–334 (MRFSHFLKYN…HMNTRQELIE (334 aa)) enclose the SPX domain. Over 1–461 (MRFSHFLKYN…KLFFGKRAMK (461 aa)) the chain is Extracellular. Disordered stretches follow at residues 40–74 (ETPTGDLNDDADSQTPGPIADIESNIAAGEPSSSK) and 86–107 (FGSKTPSGSKRGDSDEKAIDGN). The segment covering 95-104 (KRGDSDEKAI) has biased composition (basic and acidic residues). Residue Lys-102 forms a Glycyl lysine isopeptide (Lys-Gly) (interchain with G-Cter in ubiquitin) linkage. Residues Asn-162, Asn-202, and Asn-274 are each glycosylated (N-linked (GlcNAc...) asparagine). A helical transmembrane segment spans residues 462–482 (IGFIIIVTGVLLGVKTFNDPV). The Cytoplasmic segment spans residues 483–493 (EHRCMALVECC). A helical membrane pass occupies residues 494–514 (AFLWASEAIPLHITGLLVPLL). Over 515 to 537 (TVLFRVLKDDDGKVMGAAAASTE) the chain is Extracellular. Residues 538-558 (ILGTMWSSTIMILLAGFTLGE) form a helical membrane-spanning segment. The Cytoplasmic segment spans residues 559–583 (ALSQYNVAKVLASWLLALAGTKPRN). A helical transmembrane segment spans residues 584–604 (VLLMAMSVVFFLSMWISNVAS). The Extracellular portion of the chain corresponds to 605–627 (PVLTYSLLTPLLDPLDYTSPFAK). The helical transmembrane segment at 628–648 (ALVMGVALSADIGGMASPISS) threads the bilayer. Over 649 to 667 (PQNIISMQYLKPYGIGWGQ) the chain is Cytoplasmic. A helical transmembrane segment spans residues 668–688 (FFAVALPTGILSMLCSWALMI). The Extracellular portion of the chain corresponds to 689-707 (LTFKIGKTKLEKFKPIRTR). Residues 708-728 (FTIKQYFIIIVTIATILLWCV) form a helical membrane-spanning segment. Topologically, residues 729 to 735 (ESQIESA) are cytoplasmic. The helical transmembrane segment at 736-756 (FGSSGEIAVIPIVLFFGTGLL) threads the bilayer. Residues 757-767 (STKDFNTFPWS) lie on the Extracellular side of the membrane. Residues 768–788 (IVVLAMGGIALGKAVSSSGLL) form a helical membrane-spanning segment. At 789–802 (VTIARALQKKIQND) the chain is on the cytoplasmic side. Residues 803 to 823 (GVFAILCIFGILMLVVGTFVS) traverse the membrane as a helical segment. Topologically, residues 824-849 (HTVSAIIIIPLVQEVGDKLSDPKAAP) are extracellular. The chain crosses the membrane as a helical span at residues 850–870 (ILVFGCALLASCGMGLASSGF). Over 871–898 (PNVTAISMTDKKGNRWLTVGAFISRGVP) the chain is Cytoplasmic. Residues 899 to 919 (ASLLAFVCVITLGYGISSSVL) form a helical membrane-spanning segment. Residues 920-923 (KGST) lie on the Extracellular side of the membrane.

The protein belongs to the CitM (TC 2.A.11) transporter family.

Its subcellular location is the membrane. Involved in the uptake of inorganic phosphate. This is Inorganic phosphate transporter PHO87 (PHO87) from Saccharomyces cerevisiae (strain ATCC 204508 / S288c) (Baker's yeast).